A 156-amino-acid chain; its full sequence is Endoribonuclease YbeY (156 aa).

Residues His-111, His-115, and His-121 each coordinate Zn(2+).

Belongs to the endoribonuclease YbeY family. The cofactor is Zn(2+).

Its subcellular location is the cytoplasm. Functionally, single strand-specific metallo-endoribonuclease involved in late-stage 70S ribosome quality control and in maturation of the 3' terminus of the 16S rRNA. This Hahella chejuensis (strain KCTC 2396) protein is Endoribonuclease YbeY.